Consider the following 206-residue polypeptide: MKSARTSRAWIKAHINDNFVRKANHEGYRSRAAYKLREIAEHDALFVPGMTVVDLGAVPGSWSQVALESVGPTGKVFALDMLDMQPLPGMTFIQGDFRENEVLAMLEAALGGKRADLVISDMSPNLTGIRVSDQAQGMYLAELALIFCREHLNPGKNFLVKVFQGSDFEAFRQMMQTDFSKVVIRKPKASRDRSKELYLLGLEKII.

Gly60, Trp62, Asp80, Asp96, and Asp121 together coordinate S-adenosyl-L-methionine. Lys161 (proton acceptor) is an active-site residue.

It belongs to the class I-like SAM-binding methyltransferase superfamily. RNA methyltransferase RlmE family.

It localises to the cytoplasm. The enzyme catalyses uridine(2552) in 23S rRNA + S-adenosyl-L-methionine = 2'-O-methyluridine(2552) in 23S rRNA + S-adenosyl-L-homocysteine + H(+). Specifically methylates the uridine in position 2552 of 23S rRNA at the 2'-O position of the ribose in the fully assembled 50S ribosomal subunit. This is Ribosomal RNA large subunit methyltransferase E from Nitrosomonas europaea (strain ATCC 19718 / CIP 103999 / KCTC 2705 / NBRC 14298).